The following is a 71-amino-acid chain: Small ribosomal subunit protein bS18 (71 aa).

This sequence belongs to the bacterial ribosomal protein bS18 family. As to quaternary structure, part of the 30S ribosomal subunit. Forms a tight heterodimer with protein bS6.

Its function is as follows. Binds as a heterodimer with protein bS6 to the central domain of the 16S rRNA, where it helps stabilize the platform of the 30S subunit. This chain is Small ribosomal subunit protein bS18, found in Synechococcus elongatus (strain ATCC 33912 / PCC 7942 / FACHB-805) (Anacystis nidulans R2).